Here is a 131-residue protein sequence, read N- to C-terminus: 1,4-dihydroxy-2-naphthoyl-CoA hydrolase (131 aa).

The active site involves D7.

The protein belongs to the 4-hydroxybenzoyl-CoA thioesterase family. DHNA-CoA hydrolase subfamily.

It carries out the reaction 1,4-dihydroxy-2-naphthoyl-CoA + H2O = 1,4-dihydroxy-2-naphthoate + CoA + H(+). It participates in cofactor biosynthesis; phylloquinone biosynthesis. Its pathway is quinol/quinone metabolism; 1,4-dihydroxy-2-naphthoate biosynthesis; 1,4-dihydroxy-2-naphthoate from chorismate: step 7/7. Its function is as follows. Catalyzes the hydrolysis of 1,4-dihydroxy-2-naphthoyl-CoA (DHNA-CoA) to 1,4-dihydroxy-2-naphthoate (DHNA), a reaction involved in phylloquinone (vitamin K1) biosynthesis. This chain is 1,4-dihydroxy-2-naphthoyl-CoA hydrolase, found in Synechococcus sp. (strain RCC307).